The chain runs to 457 residues: Siroheme synthase (457 aa).

A precorrin-2 dehydrogenase /sirohydrochlorin ferrochelatase region spans residues Leu-4–Ala-202. NAD(+)-binding positions include Asp-22–Val-23 and Leu-43–Thr-44. Phosphoserine is present on Ser-128. The uroporphyrinogen-III C-methyltransferase stretch occupies residues Gly-216–Arg-448. Pro-225 serves as a coordination point for S-adenosyl-L-methionine. Residue Asp-248 is the Proton acceptor of the active site. Lys-270 functions as the Proton donor in the catalytic mechanism. Residues Gly-301–Asp-303, Ile-306, Thr-331–Ala-332, Met-382, Gly-411, and Ala-437 each bind S-adenosyl-L-methionine.

The protein in the N-terminal section; belongs to the precorrin-2 dehydrogenase / sirohydrochlorin ferrochelatase family. This sequence in the C-terminal section; belongs to the precorrin methyltransferase family. Homodimer.

The enzyme catalyses uroporphyrinogen III + 2 S-adenosyl-L-methionine = precorrin-2 + 2 S-adenosyl-L-homocysteine + H(+). It catalyses the reaction precorrin-2 + NAD(+) = sirohydrochlorin + NADH + 2 H(+). It carries out the reaction siroheme + 2 H(+) = sirohydrochlorin + Fe(2+). It functions in the pathway cofactor biosynthesis; adenosylcobalamin biosynthesis; precorrin-2 from uroporphyrinogen III: step 1/1. Its pathway is cofactor biosynthesis; adenosylcobalamin biosynthesis; sirohydrochlorin from precorrin-2: step 1/1. It participates in porphyrin-containing compound metabolism; siroheme biosynthesis; precorrin-2 from uroporphyrinogen III: step 1/1. The protein operates within porphyrin-containing compound metabolism; siroheme biosynthesis; siroheme from sirohydrochlorin: step 1/1. It functions in the pathway porphyrin-containing compound metabolism; siroheme biosynthesis; sirohydrochlorin from precorrin-2: step 1/1. Multifunctional enzyme that catalyzes the SAM-dependent methylations of uroporphyrinogen III at position C-2 and C-7 to form precorrin-2 via precorrin-1. Then it catalyzes the NAD-dependent ring dehydrogenation of precorrin-2 to yield sirohydrochlorin. Finally, it catalyzes the ferrochelation of sirohydrochlorin to yield siroheme. This is Siroheme synthase from Salmonella typhimurium (strain LT2 / SGSC1412 / ATCC 700720).